The following is a 147-amino-acid chain: Putative acetyltransferase BSU40680 (147 aa).

The N-acetyltransferase domain occupies 1 to 144; the sequence is MNVKKITSEQ…PHVLMTKQDD (144 aa). CoA is bound by residues 74-76 and 115-117; these read ICI and GFY.

The protein belongs to the UPF0039 (ElaA) family.

Its function is as follows. Could catalyze the transfer of an acetyl group from acetyl coenzyme A (AcCoA) to an acceptor substrate and release both CoA and the acetylated product. This chain is Putative acetyltransferase BSU40680 (yybD), found in Bacillus subtilis (strain 168).